The following is a 491-amino-acid chain: Protein nucleotidyltransferase YdiU (491 aa).

Residues G94, G96, R97, K117, D129, G130, R180, and R187 each coordinate ATP. Catalysis depends on D256, which acts as the Proton acceptor. Mg(2+)-binding residues include N257 and D266. D266 is an ATP binding site.

The protein belongs to the SELO family. Requires Mg(2+) as cofactor. Mn(2+) is required as a cofactor.

It catalyses the reaction L-seryl-[protein] + ATP = 3-O-(5'-adenylyl)-L-seryl-[protein] + diphosphate. The catalysed reaction is L-threonyl-[protein] + ATP = 3-O-(5'-adenylyl)-L-threonyl-[protein] + diphosphate. It carries out the reaction L-tyrosyl-[protein] + ATP = O-(5'-adenylyl)-L-tyrosyl-[protein] + diphosphate. The enzyme catalyses L-histidyl-[protein] + UTP = N(tele)-(5'-uridylyl)-L-histidyl-[protein] + diphosphate. It catalyses the reaction L-seryl-[protein] + UTP = O-(5'-uridylyl)-L-seryl-[protein] + diphosphate. The catalysed reaction is L-tyrosyl-[protein] + UTP = O-(5'-uridylyl)-L-tyrosyl-[protein] + diphosphate. In terms of biological role, nucleotidyltransferase involved in the post-translational modification of proteins. It can catalyze the addition of adenosine monophosphate (AMP) or uridine monophosphate (UMP) to a protein, resulting in modifications known as AMPylation and UMPylation. This Clostridium botulinum (strain Alaska E43 / Type E3) protein is Protein nucleotidyltransferase YdiU.